Reading from the N-terminus, the 418-residue chain is Glutamyl-tRNA reductase (418 aa).

Substrate contacts are provided by residues 49–52, Ser-109, 114–116, and Gln-120; these read TCNR and EPQ. The active-site Nucleophile is Cys-50. Residue 189–194 coordinates NADP(+); sequence GAGETI.

Belongs to the glutamyl-tRNA reductase family. As to quaternary structure, homodimer.

It carries out the reaction (S)-4-amino-5-oxopentanoate + tRNA(Glu) + NADP(+) = L-glutamyl-tRNA(Glu) + NADPH + H(+). It participates in porphyrin-containing compound metabolism; protoporphyrin-IX biosynthesis; 5-aminolevulinate from L-glutamyl-tRNA(Glu): step 1/2. Its function is as follows. Catalyzes the NADPH-dependent reduction of glutamyl-tRNA(Glu) to glutamate 1-semialdehyde (GSA). The polypeptide is Glutamyl-tRNA reductase (Salmonella heidelberg (strain SL476)).